The chain runs to 377 residues: Lactosylceramide 1,3-N-acetyl-beta-D-glucosaminyltransferase A (377 aa).

The Cytoplasmic segment spans residues 1–12; it reads MLISARRLRRCQ. A helical; Signal-anchor for type II membrane protein membrane pass occupies residues 13–30; the sequence is FLQLLASCFVLSLMALLV. Topologically, residues 31–377 are lumenal; that stretch reads QEDNSLISHV…DTYPCSAAWS (347 aa). N-linked (GlcNAc...) asparagine glycosylation is found at N56, N167, and N275.

The protein belongs to the glycosyltransferase 31 family.

The protein resides in the golgi apparatus membrane. It carries out the reaction a beta-D-Gal-(1-&gt;4)-beta-D-Glc-(1&lt;-&gt;1)-Cer(d18:1(4E)) + UDP-N-acetyl-alpha-D-glucosamine = a beta-D-GlcNAc-(1-&gt;3)-beta-D-Gal-(1-&gt;4)-beta-D-Glc-(1&lt;-&gt;1)-Cer(d18:1(4E)) + UDP + H(+). It catalyses the reaction a neolactoside nLc4Cer(d18:1(4E)) + UDP-N-acetyl-alpha-D-glucosamine = a neolactoside IV(3)-beta-GlcNAc-nLc4Cer(d18:1(4E)) + UDP + H(+). It functions in the pathway protein modification; protein glycosylation. Beta-1,3-N-acetylglucosaminyltransferase that plays a key role in the synthesis of lacto- or neolacto-series carbohydrate chains on glycolipids. In Xenopus laevis (African clawed frog), this protein is Lactosylceramide 1,3-N-acetyl-beta-D-glucosaminyltransferase A (b3gnt5-a).